The chain runs to 551 residues: DNA mismatch repair protein MutL (551 aa).

Belongs to the DNA mismatch repair MutL/HexB family.

This protein is involved in the repair of mismatches in DNA. It is required for dam-dependent methyl-directed DNA mismatch repair. May act as a 'molecular matchmaker', a protein that promotes the formation of a stable complex between two or more DNA-binding proteins in an ATP-dependent manner without itself being part of a final effector complex. The polypeptide is DNA mismatch repair protein MutL (Thermosipho melanesiensis (strain DSM 12029 / CIP 104789 / BI429)).